The primary structure comprises 252 residues: Type III pantothenate kinase (252 aa).

Asp6–Val13 provides a ligand contact to ATP. Gly105 to Arg108 lines the substrate pocket. Asp107 serves as the catalytic Proton acceptor. Residue Asp127 coordinates K(+). An ATP-binding site is contributed by Thr130. A substrate-binding site is contributed by Thr182.

Belongs to the type III pantothenate kinase family. In terms of assembly, homodimer. The cofactor is NH4(+). K(+) serves as cofactor.

The protein resides in the cytoplasm. It catalyses the reaction (R)-pantothenate + ATP = (R)-4'-phosphopantothenate + ADP + H(+). Its pathway is cofactor biosynthesis; coenzyme A biosynthesis; CoA from (R)-pantothenate: step 1/5. Its function is as follows. Catalyzes the phosphorylation of pantothenate (Pan), the first step in CoA biosynthesis. This is Type III pantothenate kinase from Salinispora arenicola (strain CNS-205).